The chain runs to 559 residues: Transcription factor tstO (559 aa).

The zn(2)-C6 fungal-type DNA-binding region spans 23-50; the sequence is CDACQSAKVRCGREKPTCRRCQNQGKTC. Disordered regions lie at residues 166 to 316 and 453 to 477; these read GPST…TGFS and ASPP…ISTA. Residues 222–232 show a composition bias toward low complexity; sequence SSESLSLEPSS. Positions 255–267 are enriched in polar residues; that stretch reads TRGSQKISPNPHS. Residues 268 to 279 are compositionally biased toward basic and acidic residues; sequence IDSRTSSRDKSF. Low complexity-rich tracts occupy residues 286–316 and 462–477; these read STLG…TGFS and NNNT…ISTA.

The protein localises to the nucleus. In terms of biological role, transcription factore; part of the gene cluster that mediates the biosynthesis of the antihypercholesterolemic agents phomoidrides which are dimeric anhydrides. Probably regulates the expression of the genes from the cluster. The chain is Transcription factor tstO from Talaromyces stipitatus (strain ATCC 10500 / CBS 375.48 / QM 6759 / NRRL 1006) (Penicillium stipitatum).